Consider the following 295-residue polypeptide: Probable peptidyl-prolyl cis-trans isomerase B (295 aa).

Disordered regions lie at residues 105–128 (SADK…PATV) and 274–295 (IASG…LRLD). The region spanning 126–294 (ATVSASMATN…TEVTIESLRL (169 aa)) is the PPIase cyclophilin-type domain.

This sequence belongs to the cyclophilin-type PPIase family.

It catalyses the reaction [protein]-peptidylproline (omega=180) = [protein]-peptidylproline (omega=0). PPIases accelerate the folding of proteins. It catalyzes the cis-trans isomerization of proline imidic peptide bonds in oligopeptides. This is Probable peptidyl-prolyl cis-trans isomerase B (ppiB) from Mycobacterium leprae (strain TN).